Here is a 491-residue protein sequence, read N- to C-terminus: Anthranilate synthase component 1 (491 aa).

L-tryptophan contacts are provided by residues Ser49 and 271–273 (PYL). 306-307 (GT) provides a ligand contact to chorismate. Position 333 (Glu333) interacts with Mg(2+). Residues Tyr421, Arg441, 455–457 (GAG), and Gly457 contribute to the chorismate site. Residue Glu470 participates in Mg(2+) binding.

Belongs to the anthranilate synthase component I family. Heterotetramer consisting of two non-identical subunits: a beta subunit (TrpG) and a large alpha subunit (TrpE). Requires Mg(2+) as cofactor.

The enzyme catalyses chorismate + L-glutamine = anthranilate + pyruvate + L-glutamate + H(+). It participates in amino-acid biosynthesis; L-tryptophan biosynthesis; L-tryptophan from chorismate: step 1/5. With respect to regulation, feedback inhibited by tryptophan. Functionally, part of a heterotetrameric complex that catalyzes the two-step biosynthesis of anthranilate, an intermediate in the biosynthesis of L-tryptophan. In the first step, the glutamine-binding beta subunit (TrpG) of anthranilate synthase (AS) provides the glutamine amidotransferase activity which generates ammonia as a substrate that, along with chorismate, is used in the second step, catalyzed by the large alpha subunit of AS (TrpE) to produce anthranilate. In the absence of TrpG, TrpE can synthesize anthranilate directly from chorismate and high concentrations of ammonia. In Neisseria gonorrhoeae (strain ATCC 700825 / FA 1090), this protein is Anthranilate synthase component 1 (trpE).